The chain runs to 249 residues: RNA polymerase sigma factor SigI3 (249 aa).

Positions 60–73 (EEFSIGLAAFNEAI) match the Polymerase core binding motif. Residues 199–218 (MKEVLSRIKVNHKTIQRNRK) constitute a DNA-binding region (H-T-H motif).

It belongs to the sigma-70 factor family. SigI subfamily. In terms of assembly, interacts with RsgI3.

It is found in the cytoplasm. Negatively regulated by the anti-sigma-I factor RsgI3. Binding of the polysaccharide substrate to RsgI3 may lead to the release and activation of SigI3. In terms of biological role, sigma factors are initiation factors that promote the attachment of RNA polymerase to specific initiation sites and are then released. This sigma factor is involved in regulation of cellulosomal genes via an external polysaccharide-sensing mechanism. Recognizes the predicted promoters associated with sigI3 itself, pl11, ce12 and cipA. The chain is RNA polymerase sigma factor SigI3 from Acetivibrio thermocellus (strain ATCC 27405 / DSM 1237 / JCM 9322 / NBRC 103400 / NCIMB 10682 / NRRL B-4536 / VPI 7372) (Clostridium thermocellum).